Reading from the N-terminus, the 91-residue chain is Molybdopterin synthase sulfur carrier subunit (91 aa).

A 1-thioglycine; alternate modification is found at G91. G91 carries the post-translational modification Glycyl adenylate; alternate.

The protein belongs to the MoaD family. MOCS2A subfamily. As to quaternary structure, heterotetramer; composed of 2 small (MOCS2A) and 2 large (MOCS2B) subunits. In terms of processing, C-terminal thiocarboxylation occurs in 2 steps, it is first acyl-adenylated (-COAMP) via the hesA/moeB/thiF part of uba4, then thiocarboxylated (-COSH) via the rhodanese domain of uba4.

It localises to the cytoplasm. It functions in the pathway cofactor biosynthesis; molybdopterin biosynthesis. Its function is as follows. Acts as a sulfur carrier required for molybdopterin biosynthesis. Component of the molybdopterin synthase complex that catalyzes the conversion of precursor Z into molybdopterin by mediating the incorporation of 2 sulfur atoms into precursor Z to generate a dithiolene group. In the complex, serves as sulfur donor by being thiocarboxylated (-COSH) at its C-terminus by uba4. After interaction with MOCS2B, the sulfur is then transferred to precursor Z to form molybdopterin. This Emericella nidulans (strain FGSC A4 / ATCC 38163 / CBS 112.46 / NRRL 194 / M139) (Aspergillus nidulans) protein is Molybdopterin synthase sulfur carrier subunit.